Reading from the N-terminus, the 257-residue chain is Undecaprenyl-diphosphatase (257 aa).

Helical transmembrane passes span 4 to 24 (LFKA…PISS), 51 to 71 (HVGT…NIFF), 78 to 98 (LFII…HDLI), 106 to 126 (LIIV…EKVG), 133 to 153 (ITLS…IPGV), 171 to 191 (AYAA…AAML), 207 to 227 (LFII…KFLL), and 235 to 255 (LNLF…LYFF).

It belongs to the UppP family.

The protein localises to the cell inner membrane. It carries out the reaction di-trans,octa-cis-undecaprenyl diphosphate + H2O = di-trans,octa-cis-undecaprenyl phosphate + phosphate + H(+). Functionally, catalyzes the dephosphorylation of undecaprenyl diphosphate (UPP). Confers resistance to bacitracin. The chain is Undecaprenyl-diphosphatase from Thermodesulfovibrio yellowstonii (strain ATCC 51303 / DSM 11347 / YP87).